The following is a 599-amino-acid chain: NADH-quinone oxidoreductase subunit C/D (599 aa).

Residues 1 to 189 (MTDLTTHDLA…DPFVLTKQKE (189 aa)) form an NADH dehydrogenase I subunit C region. Residues 213 to 599 (DFMFLNLGPN…IDFVMSDVDR (387 aa)) form an NADH dehydrogenase I subunit D region.

It in the N-terminal section; belongs to the complex I 30 kDa subunit family. In the C-terminal section; belongs to the complex I 49 kDa subunit family. In terms of assembly, NDH-1 is composed of 13 different subunits. Subunits NuoB, CD, E, F, and G constitute the peripheral sector of the complex.

It localises to the cell inner membrane. The enzyme catalyses a quinone + NADH + 5 H(+)(in) = a quinol + NAD(+) + 4 H(+)(out). Its function is as follows. NDH-1 shuttles electrons from NADH, via FMN and iron-sulfur (Fe-S) centers, to quinones in the respiratory chain. The immediate electron acceptor for the enzyme in this species is believed to be ubiquinone. Couples the redox reaction to proton translocation (for every two electrons transferred, four hydrogen ions are translocated across the cytoplasmic membrane), and thus conserves the redox energy in a proton gradient. The protein is NADH-quinone oxidoreductase subunit C/D of Pectobacterium carotovorum subsp. carotovorum (strain PC1).